Consider the following 425-residue polypeptide: Multifunctional CCA protein (425 aa).

2 residues coordinate ATP: G8 and R11. Residues G8 and R11 each contribute to the CTP site. D21 and D23 together coordinate Mg(2+). Residues R91, R141, and R144 each contribute to the ATP site. CTP is bound by residues R91, R141, and R144. An HD domain is found at 230 to 331; the sequence is TGVHLMMVLD…VRLLERCDAI (102 aa).

Belongs to the tRNA nucleotidyltransferase/poly(A) polymerase family. Bacterial CCA-adding enzyme type 1 subfamily. In terms of assembly, monomer. Can also form homodimers and oligomers. The cofactor is Mg(2+). Requires Ni(2+) as cofactor.

The enzyme catalyses a tRNA precursor + 2 CTP + ATP = a tRNA with a 3' CCA end + 3 diphosphate. It catalyses the reaction a tRNA with a 3' CCA end + 2 CTP + ATP = a tRNA with a 3' CCACCA end + 3 diphosphate. Its function is as follows. Catalyzes the addition and repair of the essential 3'-terminal CCA sequence in tRNAs without using a nucleic acid template. Adds these three nucleotides in the order of C, C, and A to the tRNA nucleotide-73, using CTP and ATP as substrates and producing inorganic pyrophosphate. tRNA 3'-terminal CCA addition is required both for tRNA processing and repair. Also involved in tRNA surveillance by mediating tandem CCA addition to generate a CCACCA at the 3' terminus of unstable tRNAs. While stable tRNAs receive only 3'-terminal CCA, unstable tRNAs are marked with CCACCA and rapidly degraded. In Acidovorax ebreus (strain TPSY) (Diaphorobacter sp. (strain TPSY)), this protein is Multifunctional CCA protein.